The chain runs to 316 residues: Peptidoglycan hydrolase FlgJ (316 aa).

The tract at residues Asp-151–Phe-316 is catalytic. Catalysis depends on residues Glu-223 and Asp-248.

In the N-terminal section; belongs to the FlgJ family. This sequence in the C-terminal section; belongs to the glycosyl hydrolase 73 family.

The protein localises to the periplasm. Its function is as follows. Flagellum-specific muramidase which hydrolyzes the peptidoglycan layer to assemble the rod structure in the periplasmic space. The polypeptide is Peptidoglycan hydrolase FlgJ (flgJ) (Salmonella typhimurium (strain LT2 / SGSC1412 / ATCC 700720)).